The chain runs to 216 residues: Elongation factor Ts (216 aa).

The tract at residues 81–84 (TDFV) is involved in Mg(2+) ion dislocation from EF-Tu.

This sequence belongs to the EF-Ts family.

It is found in the cytoplasm. Its function is as follows. Associates with the EF-Tu.GDP complex and induces the exchange of GDP to GTP. It remains bound to the aminoacyl-tRNA.EF-Tu.GTP complex up to the GTP hydrolysis stage on the ribosome. This is Elongation factor Ts from Geobacter sulfurreducens (strain ATCC 51573 / DSM 12127 / PCA).